The sequence spans 994 residues: Alpha-mannosidase F (994 aa).

The signal sequence occupies residues Met-1–Ser-20. The Zn(2+) site is built by His-35, Asp-37, and Asp-151. Asp-151 (nucleophile) is an active-site residue. Residues Asn-247 and Asn-381 are each glycosylated (N-linked (GlcNAc...) asparagine). Residue His-392 coordinates Zn(2+). Asn-554, Asn-712, and Asn-932 each carry an N-linked (GlcNAc...) asparagine glycan.

It belongs to the glycosyl hydrolase 38 family. Requires Zn(2+) as cofactor.

The protein localises to the secreted. It catalyses the reaction Hydrolysis of terminal, non-reducing alpha-D-mannose residues in alpha-D-mannosides.. The protein is Alpha-mannosidase F (manF) of Dictyostelium discoideum (Social amoeba).